A 946-amino-acid polypeptide reads, in one-letter code: Protein translocase subunit SecA (946 aa).

ATP contacts are provided by residues Gln-87, Gly-105–Thr-109, and Asp-524. Disordered stretches follow at residues Pro-872 to Glu-892 and Pro-904 to Ala-946. Over residues Thr-907 to Arg-917 the composition is skewed to basic and acidic residues. Positions 930, 932, 941, and 942 each coordinate Zn(2+). The span at Lys-936 to Ala-946 shows a compositional bias: basic residues.

This sequence belongs to the SecA family. In terms of assembly, monomer and homodimer. Part of the essential Sec protein translocation apparatus which comprises SecA, SecYEG and auxiliary proteins SecDF-YajC and YidC. Zn(2+) is required as a cofactor.

The protein localises to the cell inner membrane. It localises to the cytoplasm. It catalyses the reaction ATP + H2O + cellular proteinSide 1 = ADP + phosphate + cellular proteinSide 2.. In terms of biological role, part of the Sec protein translocase complex. Interacts with the SecYEG preprotein conducting channel. Has a central role in coupling the hydrolysis of ATP to the transfer of proteins into and across the cell membrane, serving both as a receptor for the preprotein-SecB complex and as an ATP-driven molecular motor driving the stepwise translocation of polypeptide chains across the membrane. This is Protein translocase subunit SecA from Rhodopseudomonas palustris (strain BisB5).